An 88-amino-acid polypeptide reads, in one-letter code: Small ribosomal subunit protein uS15 (88 aa).

This sequence belongs to the universal ribosomal protein uS15 family. Part of the 30S ribosomal subunit. Forms a bridge to the 50S subunit in the 70S ribosome, contacting the 23S rRNA.

Its function is as follows. One of the primary rRNA binding proteins, it binds directly to 16S rRNA where it helps nucleate assembly of the platform of the 30S subunit by binding and bridging several RNA helices of the 16S rRNA. Forms an intersubunit bridge (bridge B4) with the 23S rRNA of the 50S subunit in the ribosome. This Mycoplasma capricolum subsp. capricolum (strain California kid / ATCC 27343 / NCTC 10154) protein is Small ribosomal subunit protein uS15.